A 171-amino-acid polypeptide reads, in one-letter code: tRNA-specific adenosine deaminase (171 aa).

The CMP/dCMP-type deaminase domain occupies Glu-6–Glu-133. His-57 contacts Zn(2+). Glu-59 functions as the Proton donor in the catalytic mechanism. Zn(2+) is bound by residues Cys-87 and Cys-90.

It belongs to the cytidine and deoxycytidylate deaminase family. Homodimer. It depends on Zn(2+) as a cofactor.

The catalysed reaction is adenosine(34) in tRNA + H2O + H(+) = inosine(34) in tRNA + NH4(+). In terms of biological role, catalyzes the deamination of adenosine to inosine at the wobble position 34 of tRNA(Arg2). This chain is tRNA-specific adenosine deaminase, found in Streptococcus pyogenes serotype M1.